The chain runs to 600 residues: Aspartate--tRNA(Asp/Asn) ligase (600 aa).

Glutamate 181 contacts L-aspartate. Positions 205–208 (QQYK) are aspartate. Arginine 227 provides a ligand contact to L-aspartate. ATP-binding positions include 227-229 (RDE) and glutamine 236. Histidine 455 contacts L-aspartate. Glutamate 490 contacts ATP. An L-aspartate-binding site is contributed by arginine 497. 542-545 (GLDR) is a binding site for ATP.

The protein belongs to the class-II aminoacyl-tRNA synthetase family. Type 1 subfamily. Homodimer.

The protein localises to the cytoplasm. It catalyses the reaction tRNA(Asx) + L-aspartate + ATP = L-aspartyl-tRNA(Asx) + AMP + diphosphate. Functionally, aspartyl-tRNA synthetase with relaxed tRNA specificity since it is able to aspartylate not only its cognate tRNA(Asp) but also tRNA(Asn). Reaction proceeds in two steps: L-aspartate is first activated by ATP to form Asp-AMP and then transferred to the acceptor end of tRNA(Asp/Asn). In Methylacidiphilum infernorum (isolate V4) (Methylokorus infernorum (strain V4)), this protein is Aspartate--tRNA(Asp/Asn) ligase.